The sequence spans 90 residues: Cluster 41 protein AFLA_114800 (90 aa).

The helical transmembrane segment at 55-77 (GLLLLCCFYPIGNLILLVRLSLV) threads the bilayer. N-linked (GlcNAc...) asparagine glycosylation is present at Asn80.

It localises to the membrane. Cluster 41 protein; part of the gene cluster 41 that mediates the biosynthesis of an extracellular and diffusible metabolite that is able to stimulate colony sclerotial production. The protein is Cluster 41 protein AFLA_114800 of Aspergillus flavus (strain ATCC 200026 / FGSC A1120 / IAM 13836 / NRRL 3357 / JCM 12722 / SRRC 167).